Consider the following 330-residue polypeptide: tRNA U34 carboxymethyltransferase (330 aa).

Residues K91, W105, K110, G130, 152-154 (DPS), 181-182 (IE), M196, Y200, and R315 contribute to the carboxy-S-adenosyl-L-methionine site.

The protein belongs to the class I-like SAM-binding methyltransferase superfamily. CmoB family. As to quaternary structure, homotetramer.

The catalysed reaction is carboxy-S-adenosyl-L-methionine + 5-hydroxyuridine(34) in tRNA = 5-carboxymethoxyuridine(34) in tRNA + S-adenosyl-L-homocysteine + H(+). Catalyzes carboxymethyl transfer from carboxy-S-adenosyl-L-methionine (Cx-SAM) to 5-hydroxyuridine (ho5U) to form 5-carboxymethoxyuridine (cmo5U) at position 34 in tRNAs. The chain is tRNA U34 carboxymethyltransferase from Shewanella amazonensis (strain ATCC BAA-1098 / SB2B).